A 259-amino-acid chain; its full sequence is 5'-nucleotidase SurE (259 aa).

The a divalent metal cation site is built by Asp8, Asp9, Ser40, and Asn92.

Belongs to the SurE nucleotidase family. A divalent metal cation serves as cofactor.

It is found in the cytoplasm. The enzyme catalyses a ribonucleoside 5'-phosphate + H2O = a ribonucleoside + phosphate. Functionally, nucleotidase that shows phosphatase activity on nucleoside 5'-monophosphates. In Xanthomonas campestris pv. campestris (strain B100), this protein is 5'-nucleotidase SurE.